Reading from the N-terminus, the 204-residue chain is MTKILNINSSVRIGDSISRKVTTEFINKWKAREADAIVVERDLAAQPLPHIDGSTLGAFFTPAEQRTPEQAQIATLSETLVRELFDADVIVIGAPMYNFSITSGLKAWIDHVARAGVTFKYTDKGPVGLLTGKKVYIFTASGGVYSEGPAQAMDFNATYLRTVLGFIGLTDVTIINSEGVAMGAEGVNKALAKTSNTINELLPA.

Residues S10, 16 to 18 (SIS), and 96 to 99 (MYNF) contribute to the FMN site.

Belongs to the azoreductase type 1 family. In terms of assembly, homodimer. The cofactor is FMN.

It carries out the reaction 2 a quinone + NADH + H(+) = 2 a 1,4-benzosemiquinone + NAD(+). The catalysed reaction is N,N-dimethyl-1,4-phenylenediamine + anthranilate + 2 NAD(+) = 2-(4-dimethylaminophenyl)diazenylbenzoate + 2 NADH + 2 H(+). Its function is as follows. Quinone reductase that provides resistance to thiol-specific stress caused by electrophilic quinones. Also exhibits azoreductase activity. Catalyzes the reductive cleavage of the azo bond in aromatic azo compounds to the corresponding amines. The protein is FMN-dependent NADH:quinone oxidoreductase of Herminiimonas arsenicoxydans.